Consider the following 145-residue polypeptide: Actin-related protein 4A (145 aa).

A disordered region spans residues 47 to 66 (IDDAANTTEDAKESDKEKGK). Residues 55–64 (EDAKESDKEK) are compositionally biased toward basic and acidic residues.

This sequence belongs to the actin family. ARP4 subfamily. In terms of tissue distribution, expressed in roots, leaves and flowers.

The chain is Actin-related protein 4A (ARP4A) from Arabidopsis thaliana (Mouse-ear cress).